Reading from the N-terminus, the 342-residue chain is UDP-N-acetylenolpyruvoylglucosamine reductase (342 aa).

Positions 17–192 (RFEAAARYAA…AEVTFALPVD (176 aa)) constitute an FAD-binding PCMH-type domain. Residue Arg168 is part of the active site. The active-site Proton donor is the Ser242. Glu338 is an active-site residue.

It belongs to the MurB family. The cofactor is FAD.

The protein localises to the cytoplasm. It carries out the reaction UDP-N-acetyl-alpha-D-muramate + NADP(+) = UDP-N-acetyl-3-O-(1-carboxyvinyl)-alpha-D-glucosamine + NADPH + H(+). It functions in the pathway cell wall biogenesis; peptidoglycan biosynthesis. Functionally, cell wall formation. In Ralstonia nicotianae (strain ATCC BAA-1114 / GMI1000) (Ralstonia solanacearum), this protein is UDP-N-acetylenolpyruvoylglucosamine reductase.